The following is a 283-amino-acid chain: V-set domain containing T-cell activation inhibitor 1 (283 aa).

The first 24 residues, 1–24 (MASLGQIIFWSIINIIIILAGAIA), serve as a signal peptide directing secretion. 2 Ig-like V-type domains span residues 35–144 (HFIT…ANLE) and 153–241 (PEIN…IKVT). 2 disulfides stabilise this stretch: Cys-56–Cys-130 and Cys-168–Cys-225. N-linked (GlcNAc...) asparagine glycosylation occurs at Asn-216. Gly-257 is lipidated: GPI-anchor amidated glycine. A propeptide spans 258-283 (PSPCVFSSAFVAGWALLSLSCCLMLR) (removed in mature form).

The protein belongs to the immunoglobulin superfamily. BTN/MOG family. Post-translationally, N-glycosylated. In terms of tissue distribution, expressed on the surface of professional antigen-presenting cells (at protein level). Widely expressed, including in kidney, liver, lung, pancreas, placenta, prostate, spleen, testis and thymus.

It localises to the cell membrane. In terms of biological role, negatively regulates T-cell-mediated immune response by inhibiting T-cell activation, proliferation, cytokine production and development of cytotoxicity. When expressed on the cell surface of tumor macrophages, plays an important role, together with regulatory T-cells (Treg), in the suppression of tumor-associated antigen-specific T-cell immunity. Involved in promoting epithelial cell transformation. The chain is V-set domain containing T-cell activation inhibitor 1 from Mus musculus (Mouse).